The chain runs to 550 residues: Neuronal acetylcholine receptor subunit alpha-9-II (550 aa).

The signal sequence occupies residues 1–20; that stretch reads MRKMVPVVCFATMLLQVAHS. Over 21-233 the chain is Extracellular; that stretch reads AQGRYAQQLL…YTVLLQRRSS (213 aa). Asn52 is a glycosylation site (N-linked (GlcNAc...) asparagine). A disulfide bond links Cys150 and Cys164. N-linked (GlcNAc...) asparagine glycosylation occurs at Asn165. Residues Cys214 and Cys215 are joined by a disulfide bond. The next 3 membrane-spanning stretches (helical) occupy residues 234-254, 264-284, and 298-318; these read FYIF…PLGF, VSLG…VAES, and YIAT…IMNI. At 319-528 the chain is on the cytoplasmic side; sequence HFCGAEAKPV…WKRVAKVMDR (210 aa). Residues 357 to 439 are disordered; sequence TSSSSSSSSS…HLSSSKYEGF (83 aa). Residues 358 to 367 show a composition bias toward low complexity; that stretch reads SSSSSSSSSS. Positions 413–422 are enriched in basic residues; that stretch reads RHPKPRHQHH. The chain crosses the membrane as a helical span at residues 529-549; that stretch reads FFMWIFFIMVFLMSILIIGKA.

This sequence belongs to the ligand-gated ion channel (TC 1.A.9) family. Acetylcholine receptor (TC 1.A.9.1) subfamily. As to expression, expressed in the brain, liver, olfactory mucosa, pituitary gland and hair cells of the saccule.

The protein localises to the postsynaptic cell membrane. The protein resides in the cell membrane. The protein is Neuronal acetylcholine receptor subunit alpha-9-II of Oncorhynchus mykiss (Rainbow trout).